A 170-amino-acid chain; its full sequence is 3-hydroxydecanoyl-[acyl-carrier-protein] dehydratase (170 aa).

His-69 is a catalytic residue.

Belongs to the thioester dehydratase family. FabA subfamily. As to quaternary structure, homodimer.

The protein resides in the cytoplasm. It catalyses the reaction a (3R)-hydroxyacyl-[ACP] = a (2E)-enoyl-[ACP] + H2O. The enzyme catalyses (3R)-hydroxydecanoyl-[ACP] = (2E)-decenoyl-[ACP] + H2O. It carries out the reaction (2E)-decenoyl-[ACP] = (3Z)-decenoyl-[ACP]. Its pathway is lipid metabolism; fatty acid biosynthesis. Functionally, necessary for the introduction of cis unsaturation into fatty acids. Catalyzes the dehydration of (3R)-3-hydroxydecanoyl-ACP to E-(2)-decenoyl-ACP and then its isomerization to Z-(3)-decenoyl-ACP. Can catalyze the dehydratase reaction for beta-hydroxyacyl-ACPs with saturated chain lengths up to 16:0, being most active on intermediate chain length. The protein is 3-hydroxydecanoyl-[acyl-carrier-protein] dehydratase of Caulobacter vibrioides (strain ATCC 19089 / CIP 103742 / CB 15) (Caulobacter crescentus).